The primary structure comprises 197 residues: Cytochrome c biogenesis ATP-binding export protein CcmA (197 aa).

The region spanning 1–196 (MSMLSLHQLQ…VIKSAQILQL (196 aa)) is the ABC transporter domain. 35–42 (GANGSGKS) contributes to the ATP binding site.

This sequence belongs to the ABC transporter superfamily. CcmA exporter (TC 3.A.1.107) family. In terms of assembly, the complex is composed of two ATP-binding proteins (CcmA) and two transmembrane proteins (CcmB).

Its subcellular location is the cell inner membrane. It catalyses the reaction heme b(in) + ATP + H2O = heme b(out) + ADP + phosphate + H(+). Part of the ABC transporter complex CcmAB involved in the biogenesis of c-type cytochromes; once thought to export heme, this seems not to be the case, but its exact role is uncertain. Responsible for energy coupling to the transport system. The sequence is that of Cytochrome c biogenesis ATP-binding export protein CcmA from Rickettsia typhi (strain ATCC VR-144 / Wilmington).